The sequence spans 284 residues: Bifunctional protein FolD (284 aa).

NADP(+)-binding positions include 165-167 (GRS) and Ser190.

It belongs to the tetrahydrofolate dehydrogenase/cyclohydrolase family. Homodimer.

It carries out the reaction (6R)-5,10-methylene-5,6,7,8-tetrahydrofolate + NADP(+) = (6R)-5,10-methenyltetrahydrofolate + NADPH. It catalyses the reaction (6R)-5,10-methenyltetrahydrofolate + H2O = (6R)-10-formyltetrahydrofolate + H(+). The protein operates within one-carbon metabolism; tetrahydrofolate interconversion. Catalyzes the oxidation of 5,10-methylenetetrahydrofolate to 5,10-methenyltetrahydrofolate and then the hydrolysis of 5,10-methenyltetrahydrofolate to 10-formyltetrahydrofolate. The polypeptide is Bifunctional protein FolD (Streptococcus equi subsp. equi (strain 4047)).